The following is a 282-amino-acid chain: Thiazole synthase (282 aa).

The active-site Schiff-base intermediate with DXP is the Lys-113. 1-deoxy-D-xylulose 5-phosphate contacts are provided by residues Gly-174, 201–202 (AG), and 223–224 (NT).

It belongs to the ThiG family. Homotetramer. Forms heterodimers with either ThiH or ThiS.

It is found in the cytoplasm. It carries out the reaction [ThiS sulfur-carrier protein]-C-terminal-Gly-aminoethanethioate + 2-iminoacetate + 1-deoxy-D-xylulose 5-phosphate = [ThiS sulfur-carrier protein]-C-terminal Gly-Gly + 2-[(2R,5Z)-2-carboxy-4-methylthiazol-5(2H)-ylidene]ethyl phosphate + 2 H2O + H(+). It participates in cofactor biosynthesis; thiamine diphosphate biosynthesis. Functionally, catalyzes the rearrangement of 1-deoxy-D-xylulose 5-phosphate (DXP) to produce the thiazole phosphate moiety of thiamine. Sulfur is provided by the thiocarboxylate moiety of the carrier protein ThiS. In vitro, sulfur can be provided by H(2)S. This is Thiazole synthase from Cupriavidus metallidurans (strain ATCC 43123 / DSM 2839 / NBRC 102507 / CH34) (Ralstonia metallidurans).